The sequence spans 492 residues: Bifunctional purine biosynthesis protein PurH (492 aa).

The MGS-like domain maps to 1–144; that stretch reads MKKAILSVSN…KNYKHVTTIV (144 aa).

It belongs to the PurH family.

The catalysed reaction is (6R)-10-formyltetrahydrofolate + 5-amino-1-(5-phospho-beta-D-ribosyl)imidazole-4-carboxamide = 5-formamido-1-(5-phospho-D-ribosyl)imidazole-4-carboxamide + (6S)-5,6,7,8-tetrahydrofolate. It carries out the reaction IMP + H2O = 5-formamido-1-(5-phospho-D-ribosyl)imidazole-4-carboxamide. The protein operates within purine metabolism; IMP biosynthesis via de novo pathway; 5-formamido-1-(5-phospho-D-ribosyl)imidazole-4-carboxamide from 5-amino-1-(5-phospho-D-ribosyl)imidazole-4-carboxamide (10-formyl THF route): step 1/1. It functions in the pathway purine metabolism; IMP biosynthesis via de novo pathway; IMP from 5-formamido-1-(5-phospho-D-ribosyl)imidazole-4-carboxamide: step 1/1. The chain is Bifunctional purine biosynthesis protein PurH from Staphylococcus aureus (strain bovine RF122 / ET3-1).